Reading from the N-terminus, the 748-residue chain is Protein REPRESSOR OF SILENCING 3 (748 aa).

The region spanning 10–86 (VRLHVGGLGE…GRLRLEKAKE (77 aa)) is the RRM domain. Disordered regions lie at residues 244–318 (KSIL…QSID), 350–531 (GSSK…VSDT), 579–600 (VDEEEAGKGPLKASNKSTGGSS), and 729–748 (EWAKAKKALSEPRRKKNSEE). Residues 266–288 (THPSKNRQTISLEETGRQESSQA) are compositionally biased toward polar residues. Residues 294 to 314 (KPSEVVPDKSSDEPSRTKDLE) are compositionally biased toward basic and acidic residues. Over residues 373 to 382 (LKKKTKRKRV) the composition is skewed to basic residues. Acidic residues-rich tracts occupy residues 403–416 (DTMADDIERDDSDA), 439–472 (DDSDAVEDDTAIDSMADDPASDSVAESDDGDAVE), and 491–518 (ESDDGDNVEDDTAIDSMCDDTANDDVGS). The segment covering 520–531 (DSGSLADTVSDT) has biased composition (polar residues).

Ubiquitously expressed.

The protein resides in the nucleus. It is found in the nucleolus. Its subcellular location is the nucleoplasm. Its function is as follows. RNA-binding protein required for DNA demethylation and to eluviate siRNA-mediated transcriptional gene silencing (TGS), probably by guiding ROS1. Can bind specifically single stranded G-rich RNAs of 21-, 24- or 26-nt corresponding to promoter sequence of target genes; this interaction directs demethylation of target sequences. This Arabidopsis thaliana (Mouse-ear cress) protein is Protein REPRESSOR OF SILENCING 3.